We begin with the raw amino-acid sequence, 202 residues long: Small ribosomal subunit protein uS4c (202 aa).

Residues 90 to 154 (MRLDNIIFRL…SQSIITKNLN (65 aa)) form the S4 RNA-binding domain.

Belongs to the universal ribosomal protein uS4 family. As to quaternary structure, part of the 30S ribosomal subunit. Contacts protein S5. The interaction surface between S4 and S5 is involved in control of translational fidelity.

It is found in the plastid. The protein resides in the chloroplast. One of the primary rRNA binding proteins, it binds directly to 16S rRNA where it nucleates assembly of the body of the 30S subunit. In terms of biological role, with S5 and S12 plays an important role in translational accuracy. In Ricciocarpos natans (Liverwort), this protein is Small ribosomal subunit protein uS4c (rps4).